A 501-amino-acid chain; its full sequence is ATP synthase subunit alpha (501 aa).

An ATP-binding site is contributed by Gly-169–Thr-176.

This sequence belongs to the ATPase alpha/beta chains family. In terms of assembly, F-type ATPases have 2 components, CF(1) - the catalytic core - and CF(0) - the membrane proton channel. CF(1) has five subunits: alpha(3), beta(3), gamma(1), delta(1), epsilon(1). CF(0) has three main subunits: a(1), b(2) and c(9-12). The alpha and beta chains form an alternating ring which encloses part of the gamma chain. CF(1) is attached to CF(0) by a central stalk formed by the gamma and epsilon chains, while a peripheral stalk is formed by the delta and b chains.

The protein localises to the cell inner membrane. The enzyme catalyses ATP + H2O + 4 H(+)(in) = ADP + phosphate + 5 H(+)(out). Its function is as follows. Produces ATP from ADP in the presence of a proton gradient across the membrane. The alpha chain is a regulatory subunit. The protein is ATP synthase subunit alpha of Campylobacter lari (strain RM2100 / D67 / ATCC BAA-1060).